Reading from the N-terminus, the 874-residue chain is Translation initiation factor IF-2 (874 aa).

Positions 1–289 are disordered; that stretch reads MKIKNAQLTK…KHYDEHSVQR (289 aa). Over residues 31–48 the composition is skewed to basic and acidic residues; it reads SSSEKPTTKVPEKVAKEK. Polar residues predominate over residues 81-104; sequence RSSFASEDSTIPSPVSVDTESTAF. The segment covering 105–118 has biased composition (low complexity); that stretch reads SPPVVEEVVSPLES. 2 stretches are compositionally biased toward basic and acidic residues: residues 144–158 and 186–198; these read PPKK…KEPP and PKKE…KERT. Positions 199 to 211 are enriched in polar residues; it reads GTVQTKPQQSSEV. Basic and acidic residues predominate over residues 228-260; that stretch reads YRRDTSKRPGSDFRDRSKKDDSPKAFTGRDRYG. Over residues 271–280 the composition is skewed to basic residues; that stretch reads RKKRVQKTKK. A tr-type G domain is found at 380 to 549; the sequence is IRPPIVAFMG…ALQAEVLELK (170 aa). The tract at residues 389–396 is G1; sequence GHVDHGKT. 389–396 is a binding site for GTP; sequence GHVDHGKT. A G2 region spans residues 414-418; the sequence is AITQH. The G3 stretch occupies residues 435–438; sequence DTPG. Residues 435 to 439 and 489 to 492 each bind GTP; these read DTPGH and NKCD. Residues 489 to 492 form a G4 region; that stretch reads NKCD. Residues 525-527 form a G5 region; it reads SAK.

The protein belongs to the TRAFAC class translation factor GTPase superfamily. Classic translation factor GTPase family. IF-2 subfamily.

The protein resides in the cytoplasm. Its function is as follows. One of the essential components for the initiation of protein synthesis. Protects formylmethionyl-tRNA from spontaneous hydrolysis and promotes its binding to the 30S ribosomal subunits. Also involved in the hydrolysis of GTP during the formation of the 70S ribosomal complex. The polypeptide is Translation initiation factor IF-2 (Chlamydia abortus (strain DSM 27085 / S26/3) (Chlamydophila abortus)).